The following is a 103-amino-acid chain: MDISIISDKNNPLLYRREIKFTVSFDAATPSIKDVKMKLVAVLNADKKVLVVDTLDQIFGKLEAEGYAKIYNDEKAMATIETKSVLEKNKIEEEAAEAEVAEE.

The protein belongs to the eukaryotic ribosomal protein eS24 family.

In Methanococcus maripaludis (strain C6 / ATCC BAA-1332), this protein is Small ribosomal subunit protein eS24.